A 733-amino-acid polypeptide reads, in one-letter code: Vinexin (733 aa).

Disordered stretches follow at residues 1-51, 129-165, 224-285, and 352-448; these read MARI…SNLD, TWPG…RQDK, SARA…NQVP, and ETRL…KRKA. The segment covering 32-42 has biased composition (basic and acidic residues); it reads DPNRVHTKEQL. The segment covering 147-157 has biased composition (polar residues); the sequence is QHAQNWSATWT. A SoHo domain is found at 164–232; the sequence is DKRWVKYEGI…VSARASSAEP (69 aa). 2 stretches are compositionally biased toward polar residues: residues 245 to 256 and 264 to 277; these read PGTTETSSGRNW and RNTF…SSSG. 2 positions are modified to phosphoserine: S412 and S459. SH3 domains are found at residues 444 to 503 and 518 to 579; these read KKRK…VLPA and LEYG…INRE. Positions 444-579 are binds to vinculin; sequence KKRKAARLKF…PASYVQINRE (136 aa). The tract at residues 584 to 672 is disordered; sequence LCDDGPQLPA…INLGPSSPNT (89 aa). Residue S594 is modified to Phosphoserine; by MAPK1. Residues 597 to 613 are compositionally biased toward low complexity; the sequence is PTTTAHLSSHSHPSSIP. A phosphoserine mark is found at S607, S610, and S624. Positions 638–651 are enriched in polar residues; the sequence is EPRSQTQSLNTPGP. Residues 674 to 733 form the SH3 3 domain; the sequence is IHWTPYRAMYQYRPQNEDELELREGDRVDVMQQCDDGWFVGVSRRTQKFGTFPGNYVAPV. The interval 674–733 is binds to SOS; it reads IHWTPYRAMYQYRPQNEDELELREGDRVDVMQQCDDGWFVGVSRRTQKFGTFPGNYVAPV.

As to quaternary structure, interacts with vinculin by the first two SH3 domains and the proline rich region of vinculin. Binds to SOS (guanine nucleotide exchange factor of RAS and RAC), through its third SH3 domain. The formation of this complex is down-regulated by phosphorylation of SOS. Interacts with SAFB2, INPPL1/SHIP2 and SRCIN1. Interacts with DLG5 through its third SH3 domain. Interacts with SOCS7 and MAPK1/ERK2. Interacts with FASLG. In terms of processing, phosphorylated at Ser-594 by MAPK1/ERK2 during cell spreading.

Its subcellular location is the cell junction. The protein resides in the focal adhesion. It is found in the cytoplasm. It localises to the cytoskeleton. Its function is as follows. Promotes up-regulation of actin stress fiber formation. The chain is Vinexin (Sorbs3) from Mus musculus (Mouse).